The primary structure comprises 183 residues: Probable chemoreceptor glutamine deamidase CheD (183 aa).

It belongs to the CheD family.

The catalysed reaction is L-glutaminyl-[protein] + H2O = L-glutamyl-[protein] + NH4(+). Its function is as follows. Probably deamidates glutamine residues to glutamate on methyl-accepting chemotaxis receptors (MCPs), playing an important role in chemotaxis. This chain is Probable chemoreceptor glutamine deamidase CheD, found in Zymomonas mobilis subsp. mobilis (strain ATCC 31821 / ZM4 / CP4).